The following is a 246-amino-acid chain: Uroporphyrinogen-III synthase (246 aa).

This sequence belongs to the uroporphyrinogen-III synthase family. In terms of assembly, monomer.

The enzyme catalyses hydroxymethylbilane = uroporphyrinogen III + H2O. It functions in the pathway porphyrin-containing compound metabolism; protoporphyrin-IX biosynthesis; coproporphyrinogen-III from 5-aminolevulinate: step 3/4. Functionally, catalyzes cyclization of the linear tetrapyrrole, hydroxymethylbilane, to the macrocyclic uroporphyrinogen III. This is Uroporphyrinogen-III synthase (hemD) from Salmonella typhimurium (strain LT2 / SGSC1412 / ATCC 700720).